The following is a 393-amino-acid chain: Serine/threonine-protein kinase US3 homolog (393 aa).

One can recognise a Protein kinase domain in the interval 93 to 378 (FVILKTFTPG…AEVLLNHSVF (286 aa)). ATP-binding positions include 99–107 (FTPGAEGFA) and Lys122. Asp206 functions as the Proton acceptor in the catalytic mechanism.

It belongs to the protein kinase superfamily. Ser/Thr protein kinase family. In terms of processing, phosphorylated by ORF47; this phosphorylation regulates subsequent phosphorylation of proteins 24 and 27 by ORF66. Autophosphorylated.

Its subcellular location is the host cytoplasm. The protein localises to the host nucleus. It catalyses the reaction L-seryl-[protein] + ATP = O-phospho-L-seryl-[protein] + ADP + H(+). The enzyme catalyses L-threonyl-[protein] + ATP = O-phospho-L-threonyl-[protein] + ADP + H(+). Functionally, multifunctional serine/threonine kinase that plays a role in several processes including egress of virus particles from the nucleus, modulation of the actin cytoskeleton and inhibition of apoptosis. Phosphorylates proteins 24 and 27, two critical regulators of capsid budding from nucleus to endoplasmic reticulum, thereby facilitating virion egress. Modulates and redistributes host components of the nuclear envelope, including LMNA, emerin/EMD and the nuclear matrix protein MATR3. Phosphorylates envelope glycoprotein B (gB), probably to direct it to the cell surface. Promotes virus intracellular spread by restructuring host cell cytoskeleton. Blocks host apoptosis to extend cell survival and allow efficient viral replication. Promotes viral gene expression by phosphorylating host HDAC2 to reduce viral genome silencing. Down-regulates class I major histocompatibility complex (MHC-I) surface expression. Additionally, phosphorylates IE62 and targets it to the cytoplasm. The nuclear exclusion of IE62 enables the packaging of abundant levels of IE62 into virions. This is Serine/threonine-protein kinase US3 homolog (66) from Varicella-zoster virus (strain Dumas) (HHV-3).